A 620-amino-acid polypeptide reads, in one-letter code: Chaperone protein HscA homolog (620 aa).

It belongs to the heat shock protein 70 family.

Its function is as follows. Chaperone involved in the maturation of iron-sulfur cluster-containing proteins. Has a low intrinsic ATPase activity which is markedly stimulated by HscB. The chain is Chaperone protein HscA homolog from Shewanella putrefaciens (strain CN-32 / ATCC BAA-453).